We begin with the raw amino-acid sequence, 309 residues long: Probable lipid kinase YegS-like (309 aa).

Positions 1–134 (MAPSHWRLIL…VDLLRIDAEH (134 aa)) constitute a DAGKc domain. Residues Thr39, 65 to 71 (GDGTLSE), and Thr96 contribute to the ATP site. The Mg(2+) site is built by Val219, Asp222, and Leu224. Glu280 functions as the Proton acceptor in the catalytic mechanism.

The protein belongs to the diacylglycerol/lipid kinase family. YegS lipid kinase subfamily. It depends on Mg(2+) as a cofactor. The cofactor is Ca(2+).

The protein resides in the cytoplasm. Functionally, probably phosphorylates lipids; the in vivo substrate is unknown. This Xanthomonas oryzae pv. oryzae (strain MAFF 311018) protein is Probable lipid kinase YegS-like.